A 63-amino-acid chain; its full sequence is MARKCAICGKGVQMGMQVSHSHIRTKRTWSPNLQRVRAVVKGAPVRLNVCTRCLRSGKVQRSV.

This sequence belongs to the bacterial ribosomal protein bL28 family.

This Heliobacterium modesticaldum (strain ATCC 51547 / Ice1) protein is Large ribosomal subunit protein bL28.